We begin with the raw amino-acid sequence, 389 residues long: uncharacterized protein (389 aa).

Positions 1–29 are cleaved as a signal peptide; sequence MQPSFTPSGGKWLSIAVILLVIGLVVGFA.

It belongs to the bacterial solute-binding protein 1 family. WtpA subfamily.

This is an uncharacterized protein from Thermoplasma volcanium (strain ATCC 51530 / DSM 4299 / JCM 9571 / NBRC 15438 / GSS1).